The sequence spans 159 residues: Ribosomal RNA large subunit methyltransferase H (159 aa).

Residues L76, G108, and 127-132 each bind S-adenosyl-L-methionine; that span reads FGLLTL.

This sequence belongs to the RNA methyltransferase RlmH family. Homodimer.

It localises to the cytoplasm. The enzyme catalyses pseudouridine(1915) in 23S rRNA + S-adenosyl-L-methionine = N(3)-methylpseudouridine(1915) in 23S rRNA + S-adenosyl-L-homocysteine + H(+). Specifically methylates the pseudouridine at position 1915 (m3Psi1915) in 23S rRNA. The chain is Ribosomal RNA large subunit methyltransferase H from Streptococcus pyogenes serotype M12 (strain MGAS2096).